Here is a 183-residue protein sequence, read N- to C-terminus: Translation initiation factor IF-3 (183 aa).

The protein belongs to the IF-3 family. In terms of assembly, monomer.

It is found in the cytoplasm. Functionally, IF-3 binds to the 30S ribosomal subunit and shifts the equilibrium between 70S ribosomes and their 50S and 30S subunits in favor of the free subunits, thus enhancing the availability of 30S subunits on which protein synthesis initiation begins. This chain is Translation initiation factor IF-3, found in Pseudomonas putida (strain W619).